The primary structure comprises 254 residues: tRNA (guanine-N(7)-)-methyltransferase (254 aa).

The S-adenosyl-L-methionine site is built by glutamate 82, glutamate 107, aspartate 134, and aspartate 157. Residue aspartate 157 is part of the active site. Residues lysine 161, aspartate 193, and 233 to 236 (TKFE) contribute to the substrate site.

Belongs to the class I-like SAM-binding methyltransferase superfamily. TrmB family.

It carries out the reaction guanosine(46) in tRNA + S-adenosyl-L-methionine = N(7)-methylguanosine(46) in tRNA + S-adenosyl-L-homocysteine. It functions in the pathway tRNA modification; N(7)-methylguanine-tRNA biosynthesis. In terms of biological role, catalyzes the formation of N(7)-methylguanine at position 46 (m7G46) in tRNA. This chain is tRNA (guanine-N(7)-)-methyltransferase, found in Corynebacterium jeikeium (strain K411).